The following is a 140-amino-acid chain: MSMKYLMLLFAAMIIRSFANSGNAIETTLSEITNTTTDIPAIRLCGPEGNGYCFHGICIHARDIDGMYCRCSHGYTGIRCQHVVLVDYQRSEKPNTTTSYIPSPGIVLVLLVSIIMCCLLFVYRFTRRTNKLPLQDMVVP.

Residues 1-18 form the signal peptide; sequence MSMKYLMLLFAAMIIRSF. Residues 19 to 100 lie on the Extracellular side of the membrane; it reads ANSGNAIETT…SEKPNTTTSY (82 aa). Asn-34 carries an N-linked (GlcNAc...) asparagine; by host glycan. In terms of domain architecture, EGF-like spans 41-81; the sequence is AIRLCGPEGNGYCFHGICIHARDIDGMYCRCSHGYTGIRCQ. Cystine bridges form between Cys-45/Cys-58, Cys-53/Cys-69, and Cys-71/Cys-80. Asn-95 carries an N-linked (GlcNAc...) asparagine; by host glycan. Residues 101–121 traverse the membrane as a helical segment; it reads IPSPGIVLVLLVSIIMCCLLF. Topologically, residues 122 to 140 are cytoplasmic; sequence VYRFTRRTNKLPLQDMVVP.

This sequence belongs to the orthopoxvirus OPG019 family. As to quaternary structure, variola growth factor interacts with host EGFR and promotes EGFR dimerization.

The protein localises to the host membrane. Its subcellular location is the secreted. In terms of biological role, stimulates cellular proliferation (hyperplasia)and mobility around infected cells to promote rapid and efficient spread of infection. This effect is beneficial for virus replication in vivo, because poxviruses replicate possibly better in proliferating cells than in quiescent cells. Acts by binding host EGFR, inducing its dimerization, autophosphorylation and leading to activation of several cellular pathways regulating cell proliferation or cell survival. The activation by host EGFR of mitogen activated protein kinases (MAPK) and extracellular-signal regulated kinases (ERK) are essential for the positive effect of vaccinia growth factor on poxvirus virulence in vivo. The sequence is that of Pro-variola growth factor (OPG019) from Variola virus.